Reading from the N-terminus, the 230-residue chain is A-type ATP synthase subunit D (230 aa).

The interval A204 to D230 is disordered. Residues E208–D230 are compositionally biased toward acidic residues.

The protein belongs to the V-ATPase D subunit family. Has multiple subunits with at least A(3), B(3), C, D, E, F, H, I and proteolipid K(x).

The protein localises to the cell membrane. Functionally, component of the A-type ATP synthase that produces ATP from ADP in the presence of a proton gradient across the membrane. This chain is A-type ATP synthase subunit D, found in Haloarcula marismortui (strain ATCC 43049 / DSM 3752 / JCM 8966 / VKM B-1809) (Halobacterium marismortui).